The primary structure comprises 304 residues: MALSPSVVPQESKEDNANCVETKPSQTTSIASEDPLQNLCLASQEVLRKAQQSGRSRCRQCGGSRMFYCYTCCVPVGNVPTEQIPCVQLPLKIDIIKHPNETDGKSTAVHAKLLAPDSVNIYTYPCIPEYEGKDHEVVLVFPGPQSISIEDVSFHLQKRIESKGRNKADNLDVPPRKLKRTTDEEGWDLHESTRQGPELKRVVFIDSTWSQTNQIASDERLRELLQVELRTRKTCFWRHQKGKPDTFLSTIEAIYYFLVDYHSAVQKEKYRGQYDNLLFFYSFMYRLIKNARGSGEKAKPQLVQ.

Disordered regions lie at residues 1–29 and 165–193; these read MALS…QTTS and RNKA…HEST. Residues 180 to 193 show a composition bias toward basic and acidic residues; it reads RTTDEEGWDLHEST. Residues 206–209 carry the DXTW motif; sequence DSTW.

The protein belongs to the TDD superfamily. DTWD1 family.

The protein resides in the nucleus. The enzyme catalyses a uridine in tRNA + S-adenosyl-L-methionine = a 3-[(3S)-3-amino-3-carboxypropyl]uridine in tRNA + S-methyl-5'-thioadenosine + H(+). Catalyzes the formation of 3-(3-amino-3-carboxypropyl)uridine (acp3U) at position 20 in the D-loop of several cytoplasmic tRNAs (acp3U(20)). The sequence is that of tRNA-uridine aminocarboxypropyltransferase 1 from Mus musculus (Mouse).